Here is a 562-residue protein sequence, read N- to C-terminus: Carboxylesterase 1E (562 aa).

A signal peptide spans 1 to 19 (MCLSALILVSLAAFTAGAG). Residue Asn-80 is glycosylated (N-linked (GlcNAc...) asparagine). A disulfide bond links Cys-88 and Cys-117. Ser-222 (acyl-ester intermediate) is an active-site residue. Cys-274 and Cys-285 are oxidised to a cystine. A glycan (N-linked (GlcNAc...) asparagine) is linked at Asn-276. Residues Glu-354 and His-467 each act as charge relay system in the active site. Residue Asn-490 is glycosylated (N-linked (GlcNAc...) asparagine). The Prevents secretion from ER motif lies at 559-562 (HTEL).

Belongs to the type-B carboxylesterase/lipase family.

The protein localises to the endoplasmic reticulum lumen. The protein resides in the microsome membrane. The catalysed reaction is a carboxylic ester + H2O = an alcohol + a carboxylate + H(+). It catalyses the reaction all-trans-retinyl hexadecanoate + H2O = all-trans-retinol + hexadecanoate + H(+). In terms of biological role, involved in the detoxification of xenobiotics and in the activation of ester and amide prodrugs. Hydrolyzes retinyl esters. The protein is Carboxylesterase 1E of Mus musculus (Mouse).